A 381-amino-acid chain; its full sequence is Chymosin (381 aa).

A signal peptide spans Met1–Gly16. A propeptide spans Ala17–Phe58 (activation peptide). In terms of domain architecture, Peptidase A1 spans Tyr74–Ala378. Residue Asp92 is part of the active site. Intrachain disulfides connect Cys105–Cys110 and Cys265–Cys269. Residue Asp274 is part of the active site. Cys308 and Cys341 are disulfide-bonded.

It belongs to the peptidase A1 family. In terms of assembly, monomer.

It carries out the reaction Broad specificity similar to that of pepsin A. Clots milk by cleavage of a single 104-Ser-Phe-|-Met-Ala-107 bond in kappa-chain of casein.. Functionally, chymosin is synthesized in the mucosa of the stomach. The enzyme hydrolyzes casein to paracasein. This is Chymosin (CYM) from Ovis aries (Sheep).